The chain runs to 82 residues: Omega-ctenitoxin-Pn1a (82 aa).

An N-terminal signal peptide occupies residues 1-21; the sequence is MWLKIQVFLLAITLITLGIQA. A propeptide spanning residues 22–37 is cleaved from the precursor; sequence EPNSSPNNPLIEEEAR. Intrachain disulfides connect C39/C54, C46/C59, C53/C70, and C61/C68. Residues 72 to 82 constitute a propeptide that is removed on maturation; sequence KKFIEFFGGGK.

This sequence belongs to the neurotoxin 02 (plectoxin) family. Expressed by the venom gland.

It is found in the secreted. In terms of biological role, antagonist of L-type calcium channels (Cav1/CACNA1). Induces immediate clockwise gyration and flaccid paralysis after 6 hours at dose levels of 5 ug per mouse. The chain is Omega-ctenitoxin-Pn1a from Phoneutria nigriventer (Brazilian armed spider).